We begin with the raw amino-acid sequence, 344 residues long: Holliday junction branch migration complex subunit RuvB (344 aa).

The segment at 1-185 (MTERSDRDVS…FGFTAHMDFY (185 aa)) is large ATPase domain (RuvB-L). ATP is bound by residues leucine 24, arginine 25, glycine 66, lysine 69, threonine 70, serine 71, 132–134 (EDF), arginine 175, tyrosine 185, and arginine 222. Mg(2+) is bound at residue threonine 70. Positions 186–256 (EPAELERVLA…VAKAALEVYD (71 aa)) are small ATPAse domain (RuvB-S). Positions 259 to 344 (ELGLDRLDRA…VGASQPGLFE (86 aa)) are head domain (RuvB-H). Arginine 314 and arginine 319 together coordinate DNA.

It belongs to the RuvB family. In terms of assembly, homohexamer. Forms an RuvA(8)-RuvB(12)-Holliday junction (HJ) complex. HJ DNA is sandwiched between 2 RuvA tetramers; dsDNA enters through RuvA and exits via RuvB. An RuvB hexamer assembles on each DNA strand where it exits the tetramer. Each RuvB hexamer is contacted by two RuvA subunits (via domain III) on 2 adjacent RuvB subunits; this complex drives branch migration. In the full resolvosome a probable DNA-RuvA(4)-RuvB(12)-RuvC(2) complex forms which resolves the HJ.

The protein resides in the cytoplasm. It catalyses the reaction ATP + H2O = ADP + phosphate + H(+). The RuvA-RuvB-RuvC complex processes Holliday junction (HJ) DNA during genetic recombination and DNA repair, while the RuvA-RuvB complex plays an important role in the rescue of blocked DNA replication forks via replication fork reversal (RFR). RuvA specifically binds to HJ cruciform DNA, conferring on it an open structure. The RuvB hexamer acts as an ATP-dependent pump, pulling dsDNA into and through the RuvAB complex. RuvB forms 2 homohexamers on either side of HJ DNA bound by 1 or 2 RuvA tetramers; 4 subunits per hexamer contact DNA at a time. Coordinated motions by a converter formed by DNA-disengaged RuvB subunits stimulates ATP hydrolysis and nucleotide exchange. Immobilization of the converter enables RuvB to convert the ATP-contained energy into a lever motion, pulling 2 nucleotides of DNA out of the RuvA tetramer per ATP hydrolyzed, thus driving DNA branch migration. The RuvB motors rotate together with the DNA substrate, which together with the progressing nucleotide cycle form the mechanistic basis for DNA recombination by continuous HJ branch migration. Branch migration allows RuvC to scan DNA until it finds its consensus sequence, where it cleaves and resolves cruciform DNA. The protein is Holliday junction branch migration complex subunit RuvB of Mycobacterium tuberculosis (strain ATCC 25177 / H37Ra).